A 209-amino-acid chain; its full sequence is Uracil phosphoribosyltransferase (209 aa).

Residues arginine 79, arginine 104, and 131–139 each bind 5-phospho-alpha-D-ribose 1-diphosphate; that span reads DPMLATGGS. Uracil-binding positions include isoleucine 194 and 199 to 201; that span reads GDA. Aspartate 200 contacts 5-phospho-alpha-D-ribose 1-diphosphate.

It belongs to the UPRTase family. The cofactor is Mg(2+).

It carries out the reaction UMP + diphosphate = 5-phospho-alpha-D-ribose 1-diphosphate + uracil. It participates in pyrimidine metabolism; UMP biosynthesis via salvage pathway; UMP from uracil: step 1/1. Allosterically activated by GTP. In terms of biological role, catalyzes the conversion of uracil and 5-phospho-alpha-D-ribose 1-diphosphate (PRPP) to UMP and diphosphate. In Clostridium novyi (strain NT), this protein is Uracil phosphoribosyltransferase.